We begin with the raw amino-acid sequence, 255 residues long: Hemin import ATP-binding protein HmuV (255 aa).

The 237-residue stretch at 2–238 (LRVENLSIRR…EPLRAVFGLE (237 aa)) folds into the ABC transporter domain. 34–41 (GPNGAGKS) contributes to the ATP binding site.

Belongs to the ABC transporter superfamily. Heme (hemin) importer (TC 3.A.1.14.5) family. As to quaternary structure, the complex is composed of two ATP-binding proteins (HmuV), two transmembrane proteins (HmuU) and a solute-binding protein (HmuT).

The protein resides in the cell inner membrane. Functionally, part of the ABC transporter complex HmuTUV involved in hemin import. Responsible for energy coupling to the transport system. This chain is Hemin import ATP-binding protein HmuV, found in Pseudomonas aeruginosa (strain ATCC 15692 / DSM 22644 / CIP 104116 / JCM 14847 / LMG 12228 / 1C / PRS 101 / PAO1).